A 392-amino-acid polypeptide reads, in one-letter code: Potassium/proton antiporter CemA (392 aa).

Transmembrane regions (helical) follow at residues 174-194 (FLASLIWIPWIVSWFLRVWWL), 269-289 (SLANLGSDILACLILLAMLSL), 316-336 (FLILVTDVFVGFHSTHGWEVI), and 352-372 (FIFMFVATFPVLLDTVFKYWI).

The protein belongs to the CemA family.

It localises to the plastid. The protein localises to the chloroplast inner membrane. The enzyme catalyses K(+)(in) + H(+)(out) = K(+)(out) + H(+)(in). In terms of biological role, contributes to K(+)/H(+) antiport activity by supporting proton efflux to control proton extrusion and homeostasis in chloroplasts in a light-dependent manner to modulate photosynthesis. Prevents excessive induction of non-photochemical quenching (NPQ) under continuous-light conditions. Indirectly promotes efficient inorganic carbon uptake into chloroplasts. This is Potassium/proton antiporter CemA from Nephroselmis olivacea (Green alga).